Reading from the N-terminus, the 286-residue chain is D-tagatose-1,6-bisphosphate aldolase subunit KbaY (286 aa).

Aspartate 82 functions as the Proton donor in the catalytic mechanism. Residues histidine 83 and histidine 180 each contribute to the Zn(2+) site. Glycine 181 serves as a coordination point for dihydroxyacetone phosphate. A Zn(2+)-binding site is contributed by histidine 208. Dihydroxyacetone phosphate-binding positions include glycine 209–serine 211 and asparagine 230–threonine 233.

The protein belongs to the class II fructose-bisphosphate aldolase family. TagBP aldolase KbaY subfamily. As to quaternary structure, homotetramer. Forms a complex with KbaZ. The cofactor is Zn(2+).

It catalyses the reaction D-tagatofuranose 1,6-bisphosphate = D-glyceraldehyde 3-phosphate + dihydroxyacetone phosphate. It participates in carbohydrate metabolism; D-tagatose 6-phosphate degradation; D-glyceraldehyde 3-phosphate and glycerone phosphate from D-tagatose 6-phosphate: step 2/2. Its function is as follows. Catalytic subunit of the tagatose-1,6-bisphosphate aldolase KbaYZ, which catalyzes the reversible aldol condensation of dihydroxyacetone phosphate (DHAP or glycerone-phosphate) with glyceraldehyde 3-phosphate (G3P) to produce tagatose 1,6-bisphosphate (TBP). Requires KbaZ subunit for full activity and stability. This is D-tagatose-1,6-bisphosphate aldolase subunit KbaY from Escherichia coli O7:K1 (strain IAI39 / ExPEC).